We begin with the raw amino-acid sequence, 306 residues long: Pyridoxal 5'-phosphate synthase subunit PdxS (306 aa).

Asp-36 is a binding site for D-ribose 5-phosphate. Lys-93 serves as the catalytic Schiff-base intermediate with D-ribose 5-phosphate. Gly-165 is a D-ribose 5-phosphate binding site. Residue Arg-177 participates in D-glyceraldehyde 3-phosphate binding. D-ribose 5-phosphate is bound by residues Gly-226 and 247 to 248; that span reads GS.

It belongs to the PdxS/SNZ family. As to quaternary structure, in the presence of PdxT, forms a dodecamer of heterodimers.

It catalyses the reaction aldehydo-D-ribose 5-phosphate + D-glyceraldehyde 3-phosphate + L-glutamine = pyridoxal 5'-phosphate + L-glutamate + phosphate + 3 H2O + H(+). It functions in the pathway cofactor biosynthesis; pyridoxal 5'-phosphate biosynthesis. Catalyzes the formation of pyridoxal 5'-phosphate from ribose 5-phosphate (RBP), glyceraldehyde 3-phosphate (G3P) and ammonia. The ammonia is provided by the PdxT subunit. Can also use ribulose 5-phosphate and dihydroxyacetone phosphate as substrates, resulting from enzyme-catalyzed isomerization of RBP and G3P, respectively. In Nocardia farcinica (strain IFM 10152), this protein is Pyridoxal 5'-phosphate synthase subunit PdxS.